The chain runs to 448 residues: Two-component sensor PhoQ (448 aa).

The first 33 residues, 1–33 (MIRSLRIRLMLGAAALAVLFMLALLPALQRAFG), serve as a signal peptide directing secretion. Residues 169–189 (WLGGALLVLLGLLWLGLTWGF) form a helical membrane-spanning segment. An HAMP domain is found at 186–237 (TWGFRAMRGLSSELDQIESGERESLSEEHPRELLRLTHSLNRLLRSEHKQRE). Residues 245–448 (DLAHSLKTPL…ACFRIRFATV (204 aa)) enclose the Histidine kinase domain. Histidine 248 carries the post-translational modification Phosphohistidine; by autocatalysis.

Its subcellular location is the membrane. It catalyses the reaction ATP + protein L-histidine = ADP + protein N-phospho-L-histidine.. In terms of biological role, member of the two-component regulatory system PhoP/PhoQ that plays a role in the regulation of resistance towards polymyxin B and cationic antimicrobial peptides in response to limiting concentrations of Mg(2+). May function as a membrane-associated protein kinase that phosphorylates PhoP in response to environmental signals leading to activation of specific gene promoters. The sequence is that of Two-component sensor PhoQ (phoQ) from Pseudomonas aeruginosa (strain ATCC 15692 / DSM 22644 / CIP 104116 / JCM 14847 / LMG 12228 / 1C / PRS 101 / PAO1).